The sequence spans 555 residues: AP2-like ethylene-responsive transcription factor ANT (555 aa).

Disordered stretches follow at residues 34-56 (GGRE…SVPP) and 199-231 (LSMS…NHQQ). 3 stretches are compositionally biased toward low complexity: residues 41-53 (SSST…SSSS), 199-208 (LSMSPGSQSS), and 218-231 (QNQN…NHQQ). DNA-binding regions (AP2/ERF) lie at residues 283-349 (QYRG…TNFS) and 385-443 (IYRG…TNFD).

This sequence belongs to the AP2/ERF transcription factor family. AP2 subfamily. In terms of assembly, interacts with ANL2, HDG2 and HDG10, and possibly with GL2, HDG3, HDG8, ATML1 and PDF2. In terms of tissue distribution, mostly expressed in developing flowers. Also present in mature flowers, siliques and seedlings, but not in mature roots, leaves and stems. Expressed in ovules and in vegetative and floral primordia.

The protein localises to the nucleus. Transcription activator that recognizes and binds to the DNA consensus sequence 5'-CAC[AG]N[AT]TNCCNANG-3'. Required for the initiation and growth of ovules integumenta, and for the development of female gametophyte. Plays a critical role in the development of gynoecium marginal tissues (e.g. stigma, style and septa), and in the fusion of carpels and of medial ridges leading to ovule primordia. Also involved in organs initiation and development, including floral organs. Maintains the meristematic competence of cells and consequently sustains expression of cell cycle regulators during organogenesis, thus controlling the final size of each organ by controlling their cell number. Regulates INO autoinduction and expression pattern. As ANT promotes petal cell identity and mediates down-regulation of AG in flower whorl 2, it functions as a class A homeotic gene. This chain is AP2-like ethylene-responsive transcription factor ANT, found in Arabidopsis thaliana (Mouse-ear cress).